Here is a 115-residue protein sequence, read N- to C-terminus: Large ribosomal subunit protein bL19 (115 aa).

The protein belongs to the bacterial ribosomal protein bL19 family.

Functionally, this protein is located at the 30S-50S ribosomal subunit interface and may play a role in the structure and function of the aminoacyl-tRNA binding site. This chain is Large ribosomal subunit protein bL19, found in Francisella tularensis subsp. mediasiatica (strain FSC147).